The sequence spans 358 residues: Chorismate synthase (358 aa).

An NADP(+)-binding site is contributed by arginine 46. FMN is bound by residues 123 to 125, 235 to 236, glycine 275, 290 to 294, and arginine 316; these read RSS, NA, and KATPS.

This sequence belongs to the chorismate synthase family. As to quaternary structure, homotetramer. FMNH2 is required as a cofactor.

The catalysed reaction is 5-O-(1-carboxyvinyl)-3-phosphoshikimate = chorismate + phosphate. It participates in metabolic intermediate biosynthesis; chorismate biosynthesis; chorismate from D-erythrose 4-phosphate and phosphoenolpyruvate: step 7/7. Functionally, catalyzes the anti-1,4-elimination of the C-3 phosphate and the C-6 proR hydrogen from 5-enolpyruvylshikimate-3-phosphate (EPSP) to yield chorismate, which is the branch point compound that serves as the starting substrate for the three terminal pathways of aromatic amino acid biosynthesis. This reaction introduces a second double bond into the aromatic ring system. The polypeptide is Chorismate synthase (Aliarcobacter butzleri (strain RM4018) (Arcobacter butzleri)).